The sequence spans 333 residues: MSQSLLAQLRKMTTVVADTGDIQAIEKVRPQDATTNPSLITAAAGMPAYQKIVDDTLLDAKKQLGDSAPSDKVAKLAFENLAVAFGKQILAIIPGRVSTEVDARLSYDTEATIKQAHAIIEKYQKQGIGRERVLIKIASTWEGIRAAEQLEKEGIHCNLTLLFGMHQAVACAEAGVTLISPFVGRILDWYKKDTGKDYVGADDPGVQSVTRIYNYFKKFGYKTVVMGASFRNTGEIIELAGCDLLTISPKLLEELDAKEAELPRKLDAEKAKGMEIERITVDKATFDKMHAEDRMAHDKLKEGIEGFSEALENLEKLLAKRLEELSAEPVGAK.

The active-site Schiff-base intermediate with substrate is the Lys-136.

It belongs to the transaldolase family. Type 1 subfamily. Homodimer.

It is found in the cytoplasm. The enzyme catalyses D-sedoheptulose 7-phosphate + D-glyceraldehyde 3-phosphate = D-erythrose 4-phosphate + beta-D-fructose 6-phosphate. The protein operates within carbohydrate degradation; pentose phosphate pathway; D-glyceraldehyde 3-phosphate and beta-D-fructose 6-phosphate from D-ribose 5-phosphate and D-xylulose 5-phosphate (non-oxidative stage): step 2/3. Its function is as follows. Transaldolase is important for the balance of metabolites in the pentose-phosphate pathway. This chain is Transaldolase, found in Acidobacterium capsulatum (strain ATCC 51196 / DSM 11244 / BCRC 80197 / JCM 7670 / NBRC 15755 / NCIMB 13165 / 161).